Here is a 494-residue protein sequence, read N- to C-terminus: Gabija protein GajB (494 aa).

In terms of domain architecture, UvrD-like helicase ATP-binding spans 1–229; the sequence is MSREQIIKDG…YHLTSNFRCC (229 aa). An ATP-binding site is contributed by 17–24; sequence AGAGSGKT.

It belongs to the helicase family. Homodimer. Interacts with GajA; 2 GajB dimers dock at opposite sides of the GajA complex to form a 4:4 GajA-GajB assembly (GajAB). GajAB interacts with Bacillus phage Phi3T Gad1 protein; this interaction forms a 4:4:8 GajAB-Gad1 complex and leads to GajAB inhibition.

Functionally, component of antiviral defense system Gabija type I, composed of GajA and GajB. Expression of Gabija type I in B.subtilis (strain BEST7003) confers resistance to phages phi105, phi29, rho14, SpBeta and SBSphiC. Expression of Gabija type I in E.coli B (strain ATCC 11303) confers resistance to phage T7. May be a helicase or contribute to GajA activation. This Bacillus cereus (strain VD045) protein is Gabija protein GajB.